Consider the following 177-residue polypeptide: Ribosome rescue factor SmrB (177 aa).

The Smr domain maps to 98-173 (LDMHGMKQDE…GAGAILVLLS (76 aa)).

This sequence belongs to the SmrB family. Associates with collided ribosomes, but not with correctly translating polysomes.

In terms of biological role, acts as a ribosome collision sensor. Detects stalled/collided disomes (pairs of ribosomes where the leading ribosome is stalled and a second ribosome has collided with it) and endonucleolytically cleaves mRNA at the 5' boundary of the stalled ribosome. Stalled/collided disomes form a new interface (primarily via the 30S subunits) that binds SmrB. Cleaved mRNA becomes available for tmRNA ligation, leading to ribosomal subunit dissociation and rescue of stalled ribosomes. The chain is Ribosome rescue factor SmrB from Aliivibrio fischeri (strain ATCC 700601 / ES114) (Vibrio fischeri).